The following is a 1472-amino-acid chain: Vacuolar cation-transporting ATPase YPK9 (1472 aa).

N-acetylmethionine is present on Met-1. Composition is skewed to polar residues over residues 1–12 (MDIPSSNQIQHG) and 72–87 (SFQS…SGNL). 3 disordered regions span residues 1-32 (MDIP…TATT), 71-115 (HSFQ…SRNP), and 179-273 (AKSY…DDVH). Over 1–293 (MDIPSSNQIQ…YHEKFYPQYA (293 aa)) the chain is Cytoplasmic. Thr-95 is subject to Phosphothreonine. Low complexity-rich tracts occupy residues 103–115 (SSAE…SRNP) and 211–222 (SATHSSSSLSRY). Residue Ser-108 is modified to Phosphoserine. Acidic residues predominate over residues 234–243 (SQTDEILEDE). The chain crosses the membrane as a helical span at residues 294–315 (PNLHYQRFYIAEEDLVIGIAAY). The Vacuolar portion of the chain corresponds to 316–321 (QTSKFW). The helical transmembrane segment at 322–344 (YIIYNLCCFLTFGLVYLLTRWLP) threads the bilayer. Residues 345 to 488 (HLKVKLYGVK…INLRMKTTSE (144 aa)) lie on the Cytoplasmic side of the membrane. The chain crosses the membrane as a helical span at residues 489–511 (ILFNEVLHPFYVFQVFSIILWGI). The Vacuolar segment spans residues 512 to 514 (DEY). Residues 515–533 (YYYAACIFLISVLSIFDSL) form a helical membrane-spanning segment. The Cytoplasmic segment spans residues 534-693 (NEQKKVSRNL…PTGFKFYRDS (160 aa)). Residues 694-713 (FKYIGFMSLIAIFGFCVSCV) form a helical membrane-spanning segment. The Vacuolar portion of the chain corresponds to 714 to 726 (QFIKLGLDKKTMI). The chain crosses the membrane as a helical span at residues 727-748 (LRALDIITIVVPPALPATLTIG). The Cytoplasmic segment spans residues 749-1244 (TNFALSRLKE…ALVTSFACFQ (496 aa)). The active-site 4-aspartylphosphate intermediate is Asp-781. 2 positions are modified to phosphoserine: Ser-1117 and Ser-1120. Asp-1187 and Asp-1191 together coordinate Mg(2+). A helical transmembrane segment spans residues 1245 to 1264 (YMSLYSAIQFITITILYSRG). The Vacuolar segment spans residues 1265 to 1271 (SNLGDFQ). A helical transmembrane segment spans residues 1272-1289 (FLYIDLLLIVPIAICMSW). Residues 1290–1307 (SKSYEKIDKKRPSANLVS) lie on the Cytoplasmic side of the membrane. Residues 1308-1331 (PKILVPLLISVFLVFLFQFIPWII) traverse the membrane as a helical segment. At 1332 to 1351 (VQKMSWYIKPIVGGDDAVQS) the chain is on the vacuolar side. A helical transmembrane segment spans residues 1352-1374 (SDNTVLFFVSNFQYILTAIVLSV). Residues 1375 to 1387 (GPPYREPMSKNFE) lie on the Cytoplasmic side of the membrane. Residues 1388 to 1407 (FIVDITVSIGASLLLMTLDT) form a helical membrane-spanning segment. Residues 1408 to 1423 (ESYLGKMLQLTPISNS) lie on the Vacuolar side of the membrane. The helical transmembrane segment at 1424 to 1446 (FTMFIIVWVILNYYAQLYIPPSI) threads the bilayer. Topologically, residues 1447 to 1472 (KGWLKKKKSSKKYKLLIQEEMKLKEV) are cytoplasmic.

The protein belongs to the cation transport ATPase (P-type) (TC 3.A.3) family. Type V subfamily.

Its subcellular location is the vacuole membrane. The catalysed reaction is ATP + H2O = ADP + phosphate + H(+). In terms of biological role, vacuolar transporter which plays a role in sequestration of divalent heavy metal ions. This Saccharomyces cerevisiae (strain ATCC 204508 / S288c) (Baker's yeast) protein is Vacuolar cation-transporting ATPase YPK9 (YPK9).